A 63-amino-acid polypeptide reads, in one-letter code: Large ribosomal subunit protein uL29 (63 aa).

The protein belongs to the universal ribosomal protein uL29 family.

This is Large ribosomal subunit protein uL29 from Shigella flexneri.